A 797-amino-acid polypeptide reads, in one-letter code: Protocadherin beta-11 (797 aa).

The first 26 residues, 1–26, serve as a signal peptide directing secretion; that stretch reads MENQGTRTQQIRQVLLLFVLLGMSQA. Residues 27–690 lie on the Extracellular side of the membrane; it reads GSETWSFSVA…AQADSLTVYL (664 aa). Cadherin domains lie at 35-133, 138-242, 247-347, 352-451, and 456-561; these read VAEE…SPIF, MLLE…SPEF, YEVK…APEI, ITSP…APTF, and YTLF…SPFV. Asn-418, Asn-436, Asn-487, and Asn-567 each carry an N-linked (GlcNAc...) asparagine glycan. The Cadherin 6 domain maps to 568 to 671; the sequence is GSAPCTELVP…LVDGFSQPYL (104 aa). The chain crosses the membrane as a helical span at residues 691–711; sequence VVALASVSSLFLFSVLLFVAV. Over 712-797 the chain is Cytoplasmic; the sequence is RLCRRSRAAS…TFRNSFGFNF (86 aa).

Its subcellular location is the cell membrane. Potential calcium-dependent cell-adhesion protein. May be involved in the establishment and maintenance of specific neuronal connections in the brain. The sequence is that of Protocadherin beta-11 (PCDHB11) from Homo sapiens (Human).